A 347-amino-acid polypeptide reads, in one-letter code: GMP reductase (347 aa).

Position 108 to 131 (108 to 131 (ADFEKTKQILDLNPALNFVCIDVA)) interacts with NADP(+). The K(+) site is built by glycine 181 and glycine 183. Residue cysteine 186 is the Thioimidate intermediate of the active site. 216–239 (IVSDGGCTTPGDVAKAFGGGADFV) serves as a coordination point for NADP(+).

The protein belongs to the IMPDH/GMPR family. GuaC type 1 subfamily. Homotetramer.

The enzyme catalyses IMP + NH4(+) + NADP(+) = GMP + NADPH + 2 H(+). Catalyzes the irreversible NADPH-dependent deamination of GMP to IMP. It functions in the conversion of nucleobase, nucleoside and nucleotide derivatives of G to A nucleotides, and in maintaining the intracellular balance of A and G nucleotides. This Escherichia coli O127:H6 (strain E2348/69 / EPEC) protein is GMP reductase.